Here is a 716-residue protein sequence, read N- to C-terminus: MAKQFKRKSNGVSESNRKRGRQELRKVTRTAARKQQQDENHEDDLDVNNDSQEDNSEKEIDEEDEEGERDDNRGKAYSALLTLLKSEHKEKPKNVTSGSSSQVEKANASDSEDDGIAGANVEEEEEGEIDNNVDENEIVSESDVDDDDEDATNRLSTDPFESHFNLPSDDYLAKEEKLVLKDNEKWRTVDKQTYSDLAISSLVQLPPGEPLNPPLLKSSKLSEYTIKKRVLDSYEQAYGTDLSDLESTLINPILNYRDVNFQYKSFKNKFYRRLYTLHALNHIFKTRDRILKNTAKLHAAKEDSEELELRDQGFTRPKVLIMLPTRDACYEVVEQLIKLSGTEQQENKKKFNDQFYVKATPPATKPEDFRDAFKGNNSDFFCIGLKFTRKSLKLYSSFYSSDIILASPIGLSMILENPDKKKRQYDFLSSIEVLIVDKCNQIEMQNWDHVNTVMKYLNKVPKEFHDADFSRIRMWSINDQAKLLRQTLVFCEYLTPSINNLISSKSYNLSGKVKFKPIINSENSMMNSIGLKIKQIFQRFDSQSPLQDPDSRYKYFINAILPSLLKTSSYEDGIMIFIPSYFDYLRVKNYLKTSTKFTFGSIDEYSSQSKLTKTRQEFASGKIKLLLYTERLHYFRRYEISGVKTLIMYGLPSNPLFYKELIRFIGKSVFKEECDLDLALVKILFSKWDAVNLEKIVGNERAPVLCNSMNELYEFR.

The interval 1–161 (MAKQFKRKSN…TNRLSTDPFE (161 aa)) is disordered. Over residues 15-26 (SNRKRGRQELRK) the composition is skewed to basic and acidic residues. The segment covering 40–69 (NHEDDLDVNNDSQEDNSEKEIDEEDEEGER) has biased composition (acidic residues). Positions 94–104 (NVTSGSSSQVE) are enriched in polar residues. Residues 110–150 (DSEDDGIAGANVEEEEEGEIDNNVDENEIVSESDVDDDDED) are compositionally biased toward acidic residues.

It belongs to the UTP25 family. As to quaternary structure, component of the ribosomal small subunit (SSU) processome composed of at least 40 protein subunits and snoRNA U3.

The protein localises to the nucleus. It localises to the nucleolus. DEAD-box RNA helicase-like protein required for pre-18S rRNA processing, specifically at sites A0, A1, and A2. The chain is U3 small nucleolar RNA-associated protein 25 (UTP25) from Candida albicans (strain WO-1) (Yeast).